A 295-amino-acid polypeptide reads, in one-letter code: G1/S-specific cyclin-D1 (295 aa).

The 125-residue stretch at 28–152 (LRAMLKTEET…LLVNKLKWNL (125 aa)) folds into the Cyclin N-terminal domain. A disordered region spans residues 262-283 (AQQNVDPKATEEEGEVEEEAGL). A Glycyl lysine isopeptide (Lys-Gly) (interchain with G-Cter in ubiquitin) cross-link involves residue K269. T286 is modified (phosphothreonine).

The protein belongs to the cyclin family. Cyclin D subfamily. Interacts with either CDK4 or CDK6 protein kinase to form a serine/threonine kinase holoenzyme complex. The cyclin subunit imparts substrate specificity to the complex. Component of the ternary complex CCND1/CDK4/CDKN1B required for nuclear translocation and modulation of CDK4-mediated kinase activity. Interacts directly with CDKN1B. Can form similar complexes with either CDKN1A or CDKN2A. Interacts with UHRF2; the interaction ubiquitinates CCND1 and appears to occur independently of phosphorylation. Interacts with USP2. Interacts (via cyclin N-terminal domain) with INSM1 (via N-terminal region); the interaction competes with the binding of CCND1 to CDK4 during cell cycle progression and inhibits CDK4 activity. Interacts with CDK4; the interaction is prevented with the binding of CCND1 to INSM1 during cell cycle progression. Post-translationally, phosphorylation at Thr-286 by MAP kinases is required for ubiquitination and degradation by the DCX(AMBRA1) complex. It also plays an essential role for recognition by the FBXO31 component of SCF (SKP1-cullin-F-box) protein ligase complex following DNA damage. In terms of processing, ubiquitinated at Lys-269 by the DCX(AMBRA1) complex during the transition from G1 to S cell phase, leading to its degradation: ubiquitination is dependent on Thr-286 phosphorylation. The DCX(AMBRA1) complex represents the major regulator of CCND1 stability during the G1/S transition. Also ubiquitinated by the SCF(FBXO4) and Cul7-RING(FBXW8) ubiquitin-protein ligase complexes. Following DNA damage it is ubiquitinated by the SCF(FBXO31) protein ligase complex. SCF(FBXO31) ubiquitination is dependent on Thr-286 phosphorylation. Ubiquitinated also by UHRF2 apparently in a phosphorylation-independent manner. Ubiquitination leads to its degradation and G1 arrest. Deubiquitinated by USP2; leading to its stabilization. In terms of tissue distribution, expressed in the intestinal epithelium.

The protein localises to the nucleus. It is found in the cytoplasm. The protein resides in the nucleus membrane. Its function is as follows. Regulatory component of the cyclin D1-CDK4 (DC) complex that phosphorylates and inhibits members of the retinoblastoma (RB) protein family including RB1 and regulates the cell-cycle during G(1)/S transition. Phosphorylation of RB1 allows dissociation of the transcription factor E2F from the RB/E2F complex and the subsequent transcription of E2F target genes which are responsible for the progression through the G(1) phase. Hypophosphorylates RB1 in early G(1) phase. Cyclin D-CDK4 complexes are major integrators of various mitogenenic and antimitogenic signals. Also a substrate for SMAD3, phosphorylating SMAD3 in a cell-cycle-dependent manner and repressing its transcriptional activity. Component of the ternary complex, cyclin D1/CDK4/CDKN1B, required for nuclear translocation and activity of the cyclin D-CDK4 complex. Exhibits transcriptional corepressor activity with INSM1 on the NEUROD1 and INS promoters in a cell cycle-independent manner. In Mus musculus (Mouse), this protein is G1/S-specific cyclin-D1 (Ccnd1).